The primary structure comprises 245 residues: Acetylglutamate kinase (245 aa).

Residues 41-42 (GG), arginine 63, and asparagine 156 each bind substrate.

The protein belongs to the acetylglutamate kinase family. ArgB subfamily.

Its subcellular location is the cytoplasm. It catalyses the reaction N-acetyl-L-glutamate + ATP = N-acetyl-L-glutamyl 5-phosphate + ADP. Its pathway is amino-acid biosynthesis; L-arginine biosynthesis; N(2)-acetyl-L-ornithine from L-glutamate: step 2/4. Its function is as follows. Catalyzes the ATP-dependent phosphorylation of N-acetyl-L-glutamate. This Staphylococcus epidermidis (strain ATCC 35984 / DSM 28319 / BCRC 17069 / CCUG 31568 / BM 3577 / RP62A) protein is Acetylglutamate kinase.